Reading from the N-terminus, the 553-residue chain is CTP synthase (553 aa).

Residues 1–277 (MPTEPETDYD…DQYVMEELDI (277 aa)) form an amidoligase domain region. Serine 26 is a CTP binding site. Serine 26 serves as a coordination point for UTP. ATP-binding positions include 27–32 (GLGKGI) and aspartate 84. Mg(2+)-binding residues include aspartate 84 and glutamate 152. CTP contacts are provided by residues 159–161 (DIE), 198–203 (KTKPTQ), and lysine 234. UTP is bound by residues 198-203 (KTKPTQ) and lysine 234. The Glutamine amidotransferase type-1 domain occupies 307–544 (LVGKYDLEDA…LEAVLGDDPH (238 aa)). Residue glycine 364 coordinates L-glutamine. The active-site Nucleophile; for glutamine hydrolysis is cysteine 391. L-glutamine is bound by residues 392–395 (LGFQ), glutamate 415, and arginine 472. Catalysis depends on residues histidine 517 and glutamate 519.

It belongs to the CTP synthase family. As to quaternary structure, homotetramer.

The catalysed reaction is UTP + L-glutamine + ATP + H2O = CTP + L-glutamate + ADP + phosphate + 2 H(+). It catalyses the reaction L-glutamine + H2O = L-glutamate + NH4(+). It carries out the reaction UTP + NH4(+) + ATP = CTP + ADP + phosphate + 2 H(+). It functions in the pathway pyrimidine metabolism; CTP biosynthesis via de novo pathway; CTP from UDP: step 2/2. Its activity is regulated as follows. Allosterically activated by GTP, when glutamine is the substrate; GTP has no effect on the reaction when ammonia is the substrate. The allosteric effector GTP functions by stabilizing the protein conformation that binds the tetrahedral intermediate(s) formed during glutamine hydrolysis. Inhibited by the product CTP, via allosteric rather than competitive inhibition. Its function is as follows. Catalyzes the ATP-dependent amination of UTP to CTP with either L-glutamine or ammonia as the source of nitrogen. Regulates intracellular CTP levels through interactions with the four ribonucleotide triphosphates. The protein is CTP synthase of Haloarcula marismortui (strain ATCC 43049 / DSM 3752 / JCM 8966 / VKM B-1809) (Halobacterium marismortui).